A 305-amino-acid chain; its full sequence is Protoheme IX farnesyltransferase (305 aa).

Transmembrane regions (helical) follow at residues valine 31 to histidine 51, proline 52 to isoleucine 72, alanine 102 to leucine 119, leucine 123 to lysine 145, asparagine 151 to serine 171, isoleucine 179 to phenylalanine 199, isoleucine 218 to methionine 238, phenylalanine 240 to phenylalanine 260, and phenylalanine 281 to isoleucine 301.

It belongs to the UbiA prenyltransferase family. Protoheme IX farnesyltransferase subfamily.

It is found in the cell inner membrane. It catalyses the reaction heme b + (2E,6E)-farnesyl diphosphate + H2O = Fe(II)-heme o + diphosphate. Its pathway is porphyrin-containing compound metabolism; heme O biosynthesis; heme O from protoheme: step 1/1. Converts heme B (protoheme IX) to heme O by substitution of the vinyl group on carbon 2 of heme B porphyrin ring with a hydroxyethyl farnesyl side group. The polypeptide is Protoheme IX farnesyltransferase (Rickettsia akari (strain Hartford)).